The primary structure comprises 269 residues: Leucinostatins biosynthesis cluster protein T (269 aa).

Residues 1-15 form the signal peptide; sequence MHIILTGTGLVGAIA. Residue asparagine 254 is glycosylated (N-linked (GlcNAc...) asparagine).

Its function is as follows. Part of the gene cluster that mediates the biosynthesis of the lipopeptide antibiotics leucinostatins that show extensive biological activities, including antimalarial, antiviral, antibacterial, antifungal, and antitumor activities, as well as phytotoxic. The function of lcsT within the leucinostatins biosynthesis has not been identified yet. The chain is Leucinostatins biosynthesis cluster protein T from Purpureocillium lilacinum (Paecilomyces lilacinus).